The chain runs to 1078 residues: MAPRKRGGRGISFIFCCFRNNDHPEITYRLRNDSNFALQTMEPALPMPPVEELDVMFSELVDELDLTDKHREAMFALPAEKKWQIYCSKKKDQEENKGATSWPEFYIDQLNSMAARKSLLALEKEEEEERSKTIESLKTALRTKPMRFVTRFIDLDGLSCILNFLKTMDYETSESRIHTSLIGCIKALMNNSQGRAHVLAHSESINVIAQSLSTENIKTKVAVLEILGAVCLVPGGHKKVLQAMLHYQKYASERTRFQTLINDLDKSTGRYRDEVSLKTAIMSFINAVLSQGAGVESLDFRLHLRYEFLMLGIQPVIDKLREHENSTLDRHLDFFEMLRNEDELEFAKRFELVHIDTKSATQMFELTRKRLTHSEAYPHFMSILHHCLQMPYKRSGNTVQYWLLLDRIIQQIVIQNDKGQDPDSTPLENFNIKNVVRMLVNENEVKQWKEQAEKMRKEHNELQQKLEKKERECDAKTQEKEEMMQTLNKMKEKLEKETTEHKQVKQQVADLTAQLHELSRRAVCASIPGGPSPGAPGGPFPSSVPGSLLPPPPPPPLPGGMLPPPPPPLPPGGPPPPPGPPPLGAIMPPPGAPMGLALKKKSIPQPTNALKSFNWSKLPENKLEGTVWTEIDDTKVFKILDLEDLERTFSAYQRQQDFFVNSNSKQKEADAIDDTLSSKLKVKELSVIDGRRAQNCNILLSRLKLSNDEIKRAILTMDEQEDLPKDMLEQLLKFVPEKSDIDLLEEHKHELDRMAKADRFLFEMSRINHYQQRLQSLYFKKKFAERVAEVKPKVEAIRSGSEEVFRSGALKQLLEVVLAFGNYMNKGQRGNAYGFKISSLNKIADTKSSIDKNITLLHYLITIVENKYPSVLNLNEELRDIPQAAKVNMTELDKEISTLRSGLKAVETELEYQKSQPPQPGDKFVSVVSQFITVASFSFSDVEDLLAEAKDLFTKAVKHFGEEAGKIQPDEFFGIFDQFLQAVSEAKQENENMRKKKEEEERRARMEAQLKEQRERERKMRKAKENSEESGEFDDLVSALRSGEVFDKDLSKLKRNRKRITNQMTDSSRERPITKLNF.

S34 carries the post-translational modification Phosphoserine. The GBD/FH3 domain occupies L45–Q420. Residues R437–S526 are a coiled coil. Disordered stretches follow at residues R456–K480 and C524–A585. The region spanning P528–K599 is the FH1 domain. Pro residues-rich tracts occupy residues G530–P539 and L548–A585. Residues K600–Q1009 enclose the FH2 domain. The interval A693–R702 is actin-binding. The segment covering K987 to S1027 has biased composition (basic and acidic residues). 2 disordered regions span residues K987–D1034 and R1055–F1078. S1027 and S1030 each carry phosphoserine. Positions S1027–K1058 constitute a DAD domain. Over residues S1067–F1078 the composition is skewed to basic and acidic residues.

This sequence belongs to the formin homology family. As to quaternary structure, homodimer. Interacts with CIP4, FNBP1 and FNBP1L. Interacts with the SH3 domains of Abl, BTK, endophilin, spectrin and SRC. Binds specifically to GTP-bound CDC42 and RHOA. Interacts with INTU; INTU mediates the indirect interaction between DAAM1 and NPHP4. Interacts (via coiled coil domain) with KANK1 (via coiled coil domain). In terms of tissue distribution, expressed in all tissues examined.

The protein localises to the cytoplasm. The protein resides in the cytoskeleton. It localises to the cilium basal body. Its function is as follows. Binds to disheveled (Dvl) and Rho, and mediates Wnt-induced Dvl-Rho complex formation. May play a role as a scaffolding protein to recruit Rho-GDP and Rho-GEF, thereby enhancing Rho-GTP formation. Can direct nucleation and elongation of new actin filaments. Involved in building functional cilia. Involved in the organization of the subapical actin network in multiciliated epithelial cells. Together with DAAM2, required for myocardial maturation and sarcomere assembly. During cell division, may regulate RHOA activation that signals spindle orientation and chromosomal segregation. In Homo sapiens (Human), this protein is Disheveled-associated activator of morphogenesis 1 (DAAM1).